Consider the following 313-residue polypeptide: Calcium homeostasis modulator protein 6 (313 aa).

Residues 1–21 (MEKFKAVLDLQRKHRNALGYS) lie on the Cytoplasmic side of the membrane. Residues 22-37 (LVTLLTAGGEKIFSSV) form a helical membrane-spanning segment. Over 38 to 46 (VFQCPCTAT) the chain is Extracellular. 3 cysteine pairs are disulfide-bonded: Cys-41–Cys-125, Cys-43–Cys-154, and Cys-138–Cys-145. Residues 47 to 68 (WNLPYGLVFLLVPALALFLLGY) form a helical membrane-spanning segment. At 69-101 (ALSARTWRLLTGCCSRSARFSSGLRSAFVCAQL) the chain is on the cytoplasmic side. A helical transmembrane segment spans residues 102 to 126 (SMTAAFAPLTWVAVALLEGSFYQCA). Topologically, residues 127-167 (VSGSARLAPYLCKGRDPNCNATLPQAPCNKQKVEMQEILSQ) are extracellular. The helical transmembrane segment at 168-190 (LKAQSQVFGWILIAAVIILLLLV) threads the bilayer. At 191–313 (KSVTRCFSPV…DMSMTNTHEL (123 aa)) the chain is on the cytoplasmic side.

Belongs to the CALHM family. Oligomerizes to form decameric and undecameric channels. Post-translationally, N-glycosylated. Immune cells in primary and secondary lymphoid organs.

It is found in the cell membrane. The catalysed reaction is ATP(in) = ATP(out). With respect to regulation, inhibited by Gd(3+). Partially inhibited by divalent ions Ca(2+) and Ba(2+). Pore-forming subunit of an ATP-permeable channel. In response to pathogen-derived and proinflammatory stimuli, relocates from intracellular compartments to NK-dendritic cell and NK-macrophage immune synapses where it mediates ATP efflux and NK cell activation involved in antimicrobial and antitumor responses. May assemble to form gap junction channel-like structures with gating and ion conductance likely regulated by membrane lipids and voltage rather than by extracellular calcium levels. This chain is Calcium homeostasis modulator protein 6, found in Mus musculus (Mouse).